The chain runs to 246 residues: MFLKTPNWETVNETPKSRVLTINELISPNLDTESNSLLATPARKYFKTSISEAQDSPTSAPSPDGNEDPTYQYNVQFHFPGPITPTTPRSKNAEMFPSPTPPLVSPTAVIEEENDDSVREFSRTLKSRLNCAMVKLSKEHEQVALIPPPPTEKIRKGSYSNKFAAKHRRCHSLDESKKFLSSLEDSSAHAAFLKAISSKHAKSNRVDNVNVSPLRWSSHRRTQSTQENSLQEVVAIDTLLKMSSSD.

The span at 49 to 61 (SISEAQDSPTSAP) shows a compositional bias: polar residues. Disordered regions lie at residues 49 to 68 (SISE…GNED) and 200 to 229 (HAKS…QENS). Ser-212 is subject to Phosphoserine.

Interacts with CLN2. Post-translationally, phosphorylated by CDC28, probably in association with G1 cyclin CLN2.

The protein localises to the cytoplasm. Weakly suppresses a RAD53 null mutation when overexpressed. This is Protein SRL3 (SRL3) from Saccharomyces cerevisiae (strain ATCC 204508 / S288c) (Baker's yeast).